Here is a 223-residue protein sequence, read N- to C-terminus: uncharacterized protein (223 aa).

The N-terminal 12 residues, Met-1–Leu-12, are a transit peptide targeting the mitochondrion.

Its subcellular location is the mitochondrion. This is an uncharacterized protein from Candida albicans (strain WO-1) (Yeast).